The primary structure comprises 249 residues: BPI fold-containing family A member 2 (249 aa).

The N-terminal stretch at 1 to 18 (MLQLWKLVLLCGVLTGTS) is a signal peptide. 2 N-linked (GlcNAc...) asparagine glycosylation sites follow: Asn-124 and Asn-132. The cysteines at positions 174 and 217 are disulfide-linked.

The protein belongs to the BPI/LBP/Plunc superfamily. Plunc family. In terms of tissue distribution, detected in submandibular gland. Secreted into saliva.

It is found in the secreted. In terms of biological role, has strong antibacterial activity against P.aeruginosa. In Homo sapiens (Human), this protein is BPI fold-containing family A member 2 (BPIFA2).